Consider the following 70-residue polypeptide: Large ribosomal subunit protein bL31 (70 aa).

Zn(2+) is bound by residues Cys-16, Cys-18, Cys-37, and Cys-40.

This sequence belongs to the bacterial ribosomal protein bL31 family. Type A subfamily. In terms of assembly, part of the 50S ribosomal subunit. Zn(2+) serves as cofactor.

Its function is as follows. Binds the 23S rRNA. This Haemophilus influenzae (strain 86-028NP) protein is Large ribosomal subunit protein bL31.